We begin with the raw amino-acid sequence, 403 residues long: uncharacterized protein (403 aa).

Over residues 55–88 (LTGSPNPQATPKQENKSNFFSEKQSVRENGNSSA) the composition is skewed to polar residues. Residues 55-95 (LTGSPNPQATPKQENKSNFFSEKQSVRENGNSSAGEKKQKW) are disordered. Residue Ser58 is modified to Phosphoserine. One can recognise a J domain in the interval 113-177 (QYYEILDLKK…NLRAHYDRTG (65 aa)). The chain crosses the membrane as a helical span at residues 263 to 283 (SIFYQLLPLIVVILFAFLSNF).

Its subcellular location is the endoplasmic reticulum membrane. This is an uncharacterized protein from Schizosaccharomyces pombe (strain 972 / ATCC 24843) (Fission yeast).